Reading from the N-terminus, the 184-residue chain is MILPIYVYGQPVLRKEAEDITPDYPNLKELIANMFETMNRADGVGLAAPQIGLPIRVVTIDLDVMSDDLPEFKDFRRAYINPHILEVGGEEVSMEEGCLSLPGIHEAVKRPDRIHVTYLDEELKEHDEWVEGYLARVMQHEFDHLDGKMFIDHLSALRKQMIKGKLGAMLKGKARCSYKVKTIK.

Cysteine 98 and histidine 140 together coordinate Fe cation. Glutamate 141 is a catalytic residue. A Fe cation-binding site is contributed by histidine 144.

It belongs to the polypeptide deformylase family. It depends on Fe(2+) as a cofactor.

It catalyses the reaction N-terminal N-formyl-L-methionyl-[peptide] + H2O = N-terminal L-methionyl-[peptide] + formate. Functionally, removes the formyl group from the N-terminal Met of newly synthesized proteins. Requires at least a dipeptide for an efficient rate of reaction. N-terminal L-methionine is a prerequisite for activity but the enzyme has broad specificity at other positions. The sequence is that of Peptide deformylase from Phocaeicola vulgatus (strain ATCC 8482 / DSM 1447 / JCM 5826 / CCUG 4940 / NBRC 14291 / NCTC 11154) (Bacteroides vulgatus).